The sequence spans 359 residues: NADH-quinone oxidoreductase subunit H (359 aa).

The next 8 membrane-spanning stretches (helical) occupy residues 19 to 39, 94 to 114, 127 to 147, 175 to 195, 202 to 222, 255 to 275, 301 to 321, and 337 to 357; these read IGWF…FIAL, FLFV…FAVL, VGLF…LAAG, IALL…IILM, FLHW…IYFI, FAVI…IISI, VWGA…QMWL, and CWKV…IWVI.

Belongs to the complex I subunit 1 family. NDH-1 is composed of 14 different subunits. Subunits NuoA, H, J, K, L, M, N constitute the membrane sector of the complex.

It localises to the cell inner membrane. The catalysed reaction is a quinone + NADH + 5 H(+)(in) = a quinol + NAD(+) + 4 H(+)(out). NDH-1 shuttles electrons from NADH, via FMN and iron-sulfur (Fe-S) centers, to quinones in the respiratory chain. The immediate electron acceptor for the enzyme in this species is believed to be ubiquinone. Couples the redox reaction to proton translocation (for every two electrons transferred, four hydrogen ions are translocated across the cytoplasmic membrane), and thus conserves the redox energy in a proton gradient. This subunit may bind ubiquinone. This Chlorobaculum tepidum (strain ATCC 49652 / DSM 12025 / NBRC 103806 / TLS) (Chlorobium tepidum) protein is NADH-quinone oxidoreductase subunit H.